Reading from the N-terminus, the 263-residue chain is MDQFVFSGGSEGGGELGGDRERDSLTPELGRFEHLIFNMQKYFCEFFAALVIVSAVAFGLAKEGGAQAAPLSITSTIFALITLFKDISGAHFNPAVSCTIYMTDPRFTLVDLLCYVAAQLIGGTVGAFIGYGIMGKALDILPLDPGMSASRQLFHEVIPTMVMIYAVLVLVFGYGVMWELTVPFVVGACVLAGAFAGATMNPAVTFGIFISNICTKNTNIDVAALLVTLFGPFLGAMFAFLGYVGTHAYHNPVPLRFLNFRGL.

A disordered region spans residues 1–22; the sequence is MDQFVFSGGSEGGGELGGDRER. Helical transmembrane passes span 41–61, 64–84, 113–133, 157–177, 180–200, and 222–242; these read KYFC…FGLA, GGAQ…ITLF, LCYV…GYGI, VIPT…YGVM, LTVP…GATM, and VAAL…AFLG.

It belongs to the MIP/aquaporin (TC 1.A.8) family. Multimer.

The protein localises to the vacuole membrane. The enzyme catalyses H2O(in) = H2O(out). The catalysed reaction is glycerol(in) = glycerol(out). It carries out the reaction urea(in) = urea(out). Its function is as follows. Mediates water and glycerol transport across cell membranes. Permeable to selected sugar alcohols of up to five carbons and urea. Permeable to methylamine/methylammonium. In Toxoplasma gondii (strain ATCC 50611 / Me49), this protein is Aquaglyceroporin.